A 750-amino-acid polypeptide reads, in one-letter code: Glutamate carboxypeptidase 2 (750 aa).

Topologically, residues 1–19 are cytoplasmic; the sequence is MWNLLHETDSAVATARRPR. The residue at position 10 (serine 10) is a Phosphoserine. The helical; Signal-anchor for type II membrane protein transmembrane segment at 20–43 threads the bilayer; it reads WLCAGALVLAGGFFLLGFLFGWFI. At 44–750 the chain is on the extracellular side; that stretch reads KSSNEATNIT…AAAETLSEVA (707 aa). Asparagine 51, asparagine 76, asparagine 121, asparagine 140, asparagine 153, and asparagine 195 each carry an N-linked (GlcNAc...) asparagine glycan. Substrate contacts are provided by arginine 210 and asparagine 257. Threonine 269 and tyrosine 272 together coordinate Ca(2+). Positions 274–587 are NAALADase; it reads ANEYAYRRGI…QVRGGMVFEL (314 aa). Asparagine 336 carries N-linked (GlcNAc...) asparagine glycosylation. Histidine 377 and aspartate 387 together coordinate Zn(2+). Glutamate 424 contributes to the substrate binding site. The active-site Nucleophile; for NAALADase activity is glutamate 424. Glutamate 425 contributes to the Zn(2+) binding site. The Ca(2+) site is built by glutamate 433 and glutamate 436. Residue aspartate 453 participates in Zn(2+) binding. N-linked (GlcNAc...) asparagine glycosylation is found at asparagine 459 and asparagine 476. Substrate-binding positions include 517–518, asparagine 519, 534–536, tyrosine 552, and 552–553; these read SG, RAR, and YH. Histidine 553 provides a ligand contact to Zn(2+). Catalysis depends on serine 628, which acts as the Charge relay system. Asparagine 638 is a glycosylation site (N-linked (GlcNAc...) asparagine). Residues aspartate 666 and histidine 689 each act as charge relay system in the active site. 699-700 contacts substrate; that stretch reads KY.

It belongs to the peptidase M28 family. M28B subfamily. In terms of assembly, homodimer. Zn(2+) is required as a cofactor. In terms of processing, the first two amino acids at the N-terminus of isoform PSMA' appear to be cleaved by limited proteolysis. The N-terminus is blocked. Highly expressed in prostate epithelium. Detected in urinary bladder, kidney, testis, ovary, fallopian tube, breast, adrenal gland, liver, esophagus, stomach, small intestine, colon and brain (at protein level). Detected in the small intestine, brain, kidney, liver, spleen, colon, trachea, spinal cord and the capillary endothelium of a variety of tumors. Expressed specifically in jejunum brush border membranes. In the brain, highly expressed in the ventral striatum and brain stem. Also expressed in fetal liver and kidney. Isoform PSMA' is the most abundant form in normal prostate. Isoform PSMA-1 is the most abundant form in primary prostate tumors. Isoform PSMA-9 is specifically expressed in prostate cancer.

The protein resides in the cell membrane. It is found in the cytoplasm. It catalyses the reaction Release of an unsubstituted, C-terminal glutamyl residue, typically from Ac-Asp-Glu or folylpoly-gamma-glutamates.. The NAALADase activity is inhibited by beta-NAAG, quisqualic acid, 2-(phosphonomethyl) pentanedioic acid (PMPA) and EDTA. Activated by cobalt. Functionally, has both folate hydrolase and N-acetylated-alpha-linked-acidic dipeptidase (NAALADase) activity. Has a preference for tri-alpha-glutamate peptides. In the intestine, required for the uptake of folate. In the brain, modulates excitatory neurotransmission through the hydrolysis of the neuropeptide, N-aceylaspartylglutamate (NAAG), thereby releasing glutamate. Involved in prostate tumor progression. Its function is as follows. Also exhibits a dipeptidyl-peptidase IV type activity. In vitro, cleaves Gly-Pro-AMC. The protein is Glutamate carboxypeptidase 2 of Homo sapiens (Human).